A 176-amino-acid polypeptide reads, in one-letter code: N,N-dimethyl phenylurea N-demethylase subunit beta (176 aa).

It belongs to the bacterial ring-hydroxylating dioxygenase beta subunit family. As to quaternary structure, pdmA (subunit alpha) and PdmB (subunit beta) form the oxygenase component of a bacterial Rieske non-heme iron oxygenase (RO) system.

It carries out the reaction a 1,1-dimethyl-3-phenylurea + 2 reduced [2Fe-2S]-[ferredoxin] + O2 + 2 H(+) = a 1-methyl-3-phenylurea + formaldehyde + 2 oxidized [2Fe-2S]-[ferredoxin] + H2O. It catalyses the reaction isoproturon + 2 reduced [2Fe-2S]-[ferredoxin] + O2 + 2 H(+) = 1-methyl-3-[4-(propan-2-yl)phenyl]urea + formaldehyde + 2 oxidized [2Fe-2S]-[ferredoxin] + H2O. The enzyme catalyses chlorotoluron + 2 reduced [2Fe-2S]-[ferredoxin] + O2 + 2 H(+) = 3-(3-chloro-4-methylphenyl)-1-methylurea + formaldehyde + 2 oxidized [2Fe-2S]-[ferredoxin] + H2O. The catalysed reaction is metoxuron + 2 reduced [2Fe-2S]-[ferredoxin] + O2 + 2 H(+) = 3-(3-chloro-4-methoxylphenyl)-1-methylurea + formaldehyde + 2 oxidized [2Fe-2S]-[ferredoxin] + H2O. It carries out the reaction monuron + 2 reduced [2Fe-2S]-[ferredoxin] + O2 + 2 H(+) = 3-(4-chlorophenyl)-1-methylurea + formaldehyde + 2 oxidized [2Fe-2S]-[ferredoxin] + H2O. It catalyses the reaction diuron + 2 reduced [2Fe-2S]-[ferredoxin] + O2 + 2 H(+) = 3-(3,4-dichlorophenyl)-1-methylurea + formaldehyde + 2 oxidized [2Fe-2S]-[ferredoxin] + H2O. The enzyme catalyses fluometuron + 2 reduced [2Fe-2S]-[ferredoxin] + O2 + 2 H(+) = 3-[3-(trifluoromethyl)phenyl]-1-methylurea + formaldehyde + 2 oxidized [2Fe-2S]-[ferredoxin] + H2O. The catalysed reaction is fenuron + 2 reduced [2Fe-2S]-[ferredoxin] + O2 + 2 H(+) = 1-methyl-3-phenylurea + formaldehyde + 2 oxidized [2Fe-2S]-[ferredoxin] + H2O. It functions in the pathway xenobiotic degradation. Activity is stimulated in vitro by coexpression of a [3Fe-4S]-type ferredoxin. In terms of biological role, part of the multicomponent N,N-dimethyl phenylurea N-demethylase responsible for the initial N-demethylation step during the bacterial metabolism of N,N-dimethyl-substituted phenylurea herbicides. Catalyzes the mono-N-demethylation of N,N-dimethyl-substituted phenylurea herbicides to their mono-N-demethylated derivatives. Is active on isoproturon (IPU), chlorotoluron, metoxuron, monoron, diuron, fluometuron and fenuron, but cannot transform the N-methoxy-N-methyl-substituted herbicides. This is N,N-dimethyl phenylurea N-demethylase subunit beta from Sphingobium sp. (strain YBL2).